The primary structure comprises 3092 residues: Probable polyketide synthase 45 (3092 aa).

Residues 10–430 form the Ketosynthase family 3 (KS3) domain; that stretch reads DNDVAIIGIG…GSNVCLILTE (421 aa). Catalysis depends on for beta-ketoacyl synthase activity residues Cys-170, His-315, and His-353. The segment at 640–673 is acyl/malonyl transferase; sequence GILASISIGHSLGEVSSAVCSGMIDLETGCFIIY. Ser-650 (for acyl/malonyl transferase activity) is an active-site residue. The N-terminal hotdog fold stretch occupies residues 967–1087; it reads INQLGNRNER…GKFSITKHND (121 aa). A PKS/mFAS DH domain is found at 967 to 1254; the sequence is INQLGNRNER…YTQLTPYKNQ (288 aa). The active-site Proton acceptor; for dehydratase activity is the His-999. Residues 1103 to 1254 form a C-terminal hotdog fold region; sequence NFVTIQKKEL…YTQLTPYKNQ (152 aa). Asp-1165 (proton donor; for dehydratase activity) is an active-site residue. Residues 2566–2644 enclose the Carrier domain; that stretch reads SDDLSIREEI…QLIQSVTDAM (79 aa). Ser-2604 carries the post-translational modification O-(pantetheine 4'-phosphoryl)serine. A helical transmembrane segment spans residues 2705 to 2725; it reads NTVFLTGSSGFIGIYILFYLI.

Pantetheine 4'-phosphate is required as a cofactor.

Its subcellular location is the membrane. In terms of biological role, probable polyketide synthase. This chain is Probable polyketide synthase 45 (pks45), found in Dictyostelium discoideum (Social amoeba).